The chain runs to 239 residues: Increased recombination centers protein 22-1 (239 aa).

The signal sequence occupies residues 1 to 19 (MKLSTIFTAFAATIATVAG). The Lumenal portion of the chain corresponds to 20 to 161 (YETTGSKQTV…AAVSFFDPRL (142 aa)). The chain crosses the membrane as a helical span at residues 162 to 182 (IFLELVLLITFAGLIYVGYEI). The Cytoplasmic portion of the chain corresponds to 183–239 (WGKQYFKGVAPVKAKKVSAAKASSPVASGPSTTSATGYDTNWIPESHLKQKKTKKVN). Low complexity predominate over residues 201 to 213 (AAKASSPVASGPS). A disordered region spans residues 201-222 (AAKASSPVASGPSTTSATGYDT).

The protein belongs to the IRC22 family.

It localises to the endoplasmic reticulum membrane. Is probably involved in a pathway contributing to genomic integrity. The polypeptide is Increased recombination centers protein 22-1 (IRC22-1) (Candida albicans (strain SC5314 / ATCC MYA-2876) (Yeast)).